We begin with the raw amino-acid sequence, 150 residues long: Transthyretin (150 aa).

A signal peptide spans 1–20 (MASYRLLLLCLAGLVFVSEA). Cysteine 30 carries the post-translational modification Sulfocysteine. Residue lysine 35 coordinates L-thyroxine. Glutamate 62 is subject to 4-carboxyglutamate. Glutamate 74 contacts L-thyroxine. The N-linked (GlcNAc...) asparagine glycan is linked to asparagine 118. Serine 137 contributes to the L-thyroxine binding site.

It belongs to the transthyretin family. In terms of assembly, homotetramer. Dimer of dimers. In the homotetramer, subunits assemble around a central channel that can accommodate two ligand molecules. Interacts with RBP4. Post-translationally, sulfonation of the reactive cysteine Cys-30 enhances the stability of the native conformation of TTR, avoiding misassembly of the protein leading to amyloid formation. Detected in plasma and cerebrospinal fluid (at protein level). Highly expressed in the choroid plexus. Detected in liver.

It localises to the secreted. Its function is as follows. Thyroid hormone-binding protein. Probably transports thyroxine from the bloodstream to the brain. This Sus scrofa (Pig) protein is Transthyretin (TTR).